A 378-amino-acid polypeptide reads, in one-letter code: Probable S-(hydroxymethyl)glutathione dehydrogenase 1 (378 aa).

Cysteine 47 contacts Zn(2+). Histidine 48 lines the NAD(+) pocket. Zn(2+) is bound by residues histidine 69, glutamate 70, cysteine 99, cysteine 102, cysteine 105, cysteine 113, and cysteine 176. Residues 201-206 (GCGCVG), aspartate 225, 293-295 (IGV), and 318-320 (SAF) each bind NAD(+).

This sequence belongs to the zinc-containing alcohol dehydrogenase family. Class-III subfamily. It depends on Zn(2+) as a cofactor.

It carries out the reaction a primary alcohol + NAD(+) = an aldehyde + NADH + H(+). The enzyme catalyses a secondary alcohol + NAD(+) = a ketone + NADH + H(+). It catalyses the reaction S-(hydroxymethyl)glutathione + NADP(+) = S-formylglutathione + NADPH + H(+). The catalysed reaction is S-(hydroxymethyl)glutathione + NAD(+) = S-formylglutathione + NADH + H(+). It carries out the reaction S-nitrosoglutathione + NADH + H(+) = S-(hydroxysulfenamide)glutathione + NAD(+). Oxidizes long-chain alcohols and, in the presence of glutathione, is able to oxidize formaldehyde. Also acts as a S-nitroso-glutathione reductase by catalyzing the NADH-dependent reduction of S-nitrosoglutathione, thereby regulating protein S-nitrosylation. The sequence is that of Probable S-(hydroxymethyl)glutathione dehydrogenase 1 from Schizosaccharomyces pombe (strain 972 / ATCC 24843) (Fission yeast).